A 406-amino-acid chain; its full sequence is Lysosome-associated membrane glycoprotein 1 (406 aa).

The signal sequence occupies residues 1–24 (MAAPGARRPLLLLLLAGLAHGASA). The segment at 25 to 188 (LFEVKNNGTT…SKEETHCTQD (164 aa)) is first lumenal domain. The Lumenal segment spans residues 25 to 370 (LFEVKNNGTT…VEECVQDGNN (346 aa)). N-linked (GlcNAc...) asparagine glycosylation is found at Asn31, Asn52, Asn58, Asn70, Asn78, Asn97, Asn101, Asn115, Asn159, and Asn177. Cys35 and Cys74 form a disulfide bridge. Cys149 and Cys185 are disulfide-bonded. The tract at residues 180–207 (KEETHCTQDGPSPTTGPPSPSPPLVPTN) is disordered. A hinge region spans residues 189–218 (GPSPTTGPPSPSPPLVPTNPTVSKYNVTGN). Residues 193 to 205 (TTGPPSPSPPLVP) are compositionally biased toward pro residues. N-linked (GlcNAc...) asparagine glycans are attached at residues Asn214, Asn219, Asn232, and Asn240. The tract at residues 219–370 (NGTCLLASMA…VEECVQDGNN (152 aa)) is second lumenal domain. The cysteines at positions 222 and 259 are disulfide-linked. Asn252 carries N-linked (GlcNAc...) (high mannose) asparagine glycosylation. N-linked (GlcNAc...) asparagine glycosylation is found at Asn282, Asn296, and Asn311. Cys327 and Cys364 form a disulfide bridge. A helical transmembrane segment spans residues 371 to 394 (MLIPIAVGGALAGLVLIVLIAYLI). At 395 to 406 (GRKRSHAGYQTI) the chain is on the cytoplasmic side.

Belongs to the LAMP family. As to quaternary structure, interacts with ABCB9; this interaction strongly stabilizes ABCB9 and protects ABCB9 against lysosomal degradation. Interacts with FURIN. Interacts with TMEM175; inhibiting the proton channel activity of TMEM175. In terms of processing, O- and N-glycosylated; some of the N-glycans attached to LAMP-1 are polylactosaminoglycans.

It localises to the lysosome membrane. It is found in the endosome membrane. The protein localises to the late endosome membrane. The protein resides in the cell membrane. Its subcellular location is the cytolytic granule membrane. Lysosomal membrane glycoprotein which plays an important role in lysosome biogenesis, lysosomal pH regulation, autophagy and cholesterol homeostasis. Acts as an important regulator of lysosomal lumen pH regulation by acting as a direct inhibitor of the proton channel TMEM175, facilitating lysosomal acidification for optimal hydrolase activity. Also plays an important role in NK-cells cytotoxicity. Mechanistically, participates in cytotoxic granule movement to the cell surface and perforin trafficking to the lytic granule. In addition, protects NK-cells from degranulation-associated damage induced by their own cytotoxic granule content. Presents carbohydrate ligands to selectins. Also implicated in tumor cell metastasis. This is Lysosome-associated membrane glycoprotein 1 (Lamp1) from Mus musculus (Mouse).